Reading from the N-terminus, the 440-residue chain is Xaa-Pro dipeptidase (440 aa).

The Mn(2+) site is built by aspartate 244, aspartate 255, histidine 335, glutamate 380, and glutamate 419.

The protein belongs to the peptidase M24B family. Bacterial-type prolidase subfamily. Mn(2+) is required as a cofactor.

The catalysed reaction is Xaa-L-Pro dipeptide + H2O = an L-alpha-amino acid + L-proline. In terms of biological role, splits dipeptides with a prolyl residue in the C-terminal position. In Shewanella loihica (strain ATCC BAA-1088 / PV-4), this protein is Xaa-Pro dipeptidase.